The sequence spans 467 residues: 3-isopropylmalate dehydratase large subunit (467 aa).

Positions 349, 409, and 412 each coordinate [4Fe-4S] cluster.

Belongs to the aconitase/IPM isomerase family. LeuC type 1 subfamily. As to quaternary structure, heterodimer of LeuC and LeuD. The cofactor is [4Fe-4S] cluster.

The enzyme catalyses (2R,3S)-3-isopropylmalate = (2S)-2-isopropylmalate. It participates in amino-acid biosynthesis; L-leucine biosynthesis; L-leucine from 3-methyl-2-oxobutanoate: step 2/4. In terms of biological role, catalyzes the isomerization between 2-isopropylmalate and 3-isopropylmalate, via the formation of 2-isopropylmaleate. The polypeptide is 3-isopropylmalate dehydratase large subunit (Ruegeria sp. (strain TM1040) (Silicibacter sp.)).